Reading from the N-terminus, the 422-residue chain is Serine--tRNA ligase (422 aa).

The disordered stretch occupies residues 1 to 20 (MHDLKSIRDNPDGFDAGLKR). 229–231 (TAE) is a binding site for L-serine. 260–262 (RSE) lines the ATP pocket. Glu-283 provides a ligand contact to L-serine. 347–350 (EISS) lines the ATP pocket. An L-serine-binding site is contributed by Ser-383.

The protein belongs to the class-II aminoacyl-tRNA synthetase family. Type-1 seryl-tRNA synthetase subfamily. Homodimer. The tRNA molecule binds across the dimer.

It localises to the cytoplasm. The enzyme catalyses tRNA(Ser) + L-serine + ATP = L-seryl-tRNA(Ser) + AMP + diphosphate + H(+). It carries out the reaction tRNA(Sec) + L-serine + ATP = L-seryl-tRNA(Sec) + AMP + diphosphate + H(+). Its pathway is aminoacyl-tRNA biosynthesis; selenocysteinyl-tRNA(Sec) biosynthesis; L-seryl-tRNA(Sec) from L-serine and tRNA(Sec): step 1/1. Functionally, catalyzes the attachment of serine to tRNA(Ser). Is also able to aminoacylate tRNA(Sec) with serine, to form the misacylated tRNA L-seryl-tRNA(Sec), which will be further converted into selenocysteinyl-tRNA(Sec). This chain is Serine--tRNA ligase, found in Paramagnetospirillum magneticum (strain ATCC 700264 / AMB-1) (Magnetospirillum magneticum).